Reading from the N-terminus, the 371-residue chain is Dual-specificity RNA methyltransferase RlmN (371 aa).

The active-site Proton acceptor is the Glu-86. Residues 105–338 (RHARYTICVS…CTIRQSKGLD (234 aa)) form the Radical SAM core domain. Cys-112 and Cys-343 are oxidised to a cystine. The [4Fe-4S] cluster site is built by Cys-119, Cys-123, and Cys-126. Residues 169–170 (GE), Ser-201, 224–226 (SLH), and Asn-300 each bind S-adenosyl-L-methionine. Cys-343 (S-methylcysteine intermediate) is an active-site residue. Over residues 348–363 (QRSQNLSPSNNNTSKP) the composition is skewed to polar residues. A disordered region spans residues 348–371 (QRSQNLSPSNNNTSKPSDIKKSES).

It belongs to the radical SAM superfamily. RlmN family. [4Fe-4S] cluster serves as cofactor.

Its subcellular location is the cytoplasm. The catalysed reaction is adenosine(2503) in 23S rRNA + 2 reduced [2Fe-2S]-[ferredoxin] + 2 S-adenosyl-L-methionine = 2-methyladenosine(2503) in 23S rRNA + 5'-deoxyadenosine + L-methionine + 2 oxidized [2Fe-2S]-[ferredoxin] + S-adenosyl-L-homocysteine. It carries out the reaction adenosine(37) in tRNA + 2 reduced [2Fe-2S]-[ferredoxin] + 2 S-adenosyl-L-methionine = 2-methyladenosine(37) in tRNA + 5'-deoxyadenosine + L-methionine + 2 oxidized [2Fe-2S]-[ferredoxin] + S-adenosyl-L-homocysteine. Specifically methylates position 2 of adenine 2503 in 23S rRNA and position 2 of adenine 37 in tRNAs. m2A2503 modification seems to play a crucial role in the proofreading step occurring at the peptidyl transferase center and thus would serve to optimize ribosomal fidelity. The polypeptide is Dual-specificity RNA methyltransferase RlmN (Campylobacter curvus (strain 525.92)).